The following is a 427-amino-acid chain: 3-phosphoshikimate 1-carboxyvinyltransferase (427 aa).

3-phosphoshikimate is bound by residues Lys20, Ser21, and Arg25. Residue Lys20 participates in phosphoenolpyruvate binding. Phosphoenolpyruvate-binding residues include Gly92 and Arg120. Ser166, Gln168, Asp312, and Lys339 together coordinate 3-phosphoshikimate. Gln168 serves as a coordination point for phosphoenolpyruvate. The active-site Proton acceptor is Asp312. Phosphoenolpyruvate is bound by residues Arg343 and Arg385.

The protein belongs to the EPSP synthase family. Monomer.

It localises to the cytoplasm. The catalysed reaction is 3-phosphoshikimate + phosphoenolpyruvate = 5-O-(1-carboxyvinyl)-3-phosphoshikimate + phosphate. The protein operates within metabolic intermediate biosynthesis; chorismate biosynthesis; chorismate from D-erythrose 4-phosphate and phosphoenolpyruvate: step 6/7. Functionally, catalyzes the transfer of the enolpyruvyl moiety of phosphoenolpyruvate (PEP) to the 5-hydroxyl of shikimate-3-phosphate (S3P) to produce enolpyruvyl shikimate-3-phosphate and inorganic phosphate. The polypeptide is 3-phosphoshikimate 1-carboxyvinyltransferase (Streptococcus pneumoniae (strain 70585)).